Reading from the N-terminus, the 279-residue chain is MNIENKEITSSWFTNLRDLLCKEFEKIEEEYAQTKGLKPAKFVRSSWQRNGGGGGVMSLMKGAVFEKVGVNISTVFGKISPEFRNEIPGVELDGKFFATGISLVAHLKSPLIPAMHFNTRYIETSKSWFGGGGDLTPFYPEKNETVKFHAAFKEACDKYDSSYYPKFKKQCDEYFYLKHRKEPRGVGGIFYDYLNNGNFEQDFAFTQDVGKALLSVYPEIVRSKLFLPWTAEQKEYQLIRRGRYVEFNLLYDRGTKFGLMTDGNVEAILMSLPPEVKFN.

Residue Ser-102 coordinates substrate. His-106 and His-116 together coordinate a divalent metal cation. His-116 (proton donor) is an active-site residue. Position 118-120 (118-120) interacts with substrate; it reads NTR. Positions 149 and 179 each coordinate a divalent metal cation. Positions 244-279 are important for dimerization; that stretch reads YVEFNLLYDRGTKFGLMTDGNVEAILMSLPPEVKFN.

It belongs to the aerobic coproporphyrinogen-III oxidase family. As to quaternary structure, homodimer. It depends on a divalent metal cation as a cofactor.

Its subcellular location is the cytoplasm. The enzyme catalyses coproporphyrinogen III + O2 + 2 H(+) = protoporphyrinogen IX + 2 CO2 + 2 H2O. Its pathway is porphyrin-containing compound metabolism; protoporphyrin-IX biosynthesis; protoporphyrinogen-IX from coproporphyrinogen-III (O2 route): step 1/1. Functionally, involved in the heme biosynthesis. Catalyzes the aerobic oxidative decarboxylation of propionate groups of rings A and B of coproporphyrinogen-III to yield the vinyl groups in protoporphyrinogen-IX. In Rickettsia peacockii (strain Rustic), this protein is Oxygen-dependent coproporphyrinogen-III oxidase.